Reading from the N-terminus, the 64-residue chain is Conotoxin mr5.1a (64 aa).

Positions 1–19 (MRCVPVFVILLLLIASAPS) are cleaved as a signal peptide. The propeptide occupies 20–48 (VDARLKTKDDMPLPSSHANIKRTLQIHRN). 4-carboxyglutamate is present on glutamate 60.

This sequence belongs to the conotoxin T superfamily. In terms of processing, contains 2 disulfide bonds that can be either 'C1-C3, C2-C4' or 'C1-C4, C2-C3', since these disulfide connectivities have been observed for conotoxins with cysteine framework V (for examples, see AC P0DQQ7 and AC P81755). In terms of tissue distribution, expressed by the venom duct.

The protein resides in the secreted. The protein is Conotoxin mr5.1a of Conus marmoreus (Marble cone).